A 760-amino-acid polypeptide reads, in one-letter code: Molybdenum cofactor sulfurase 2 (760 aa).

Residue Lys223 is modified to N6-(pyridoxal phosphate)lysine. The active site involves Cys389. The MOSC domain occupies 608–758 (QSDDEARTLR…LHCGSPLQVV (151 aa)).

This sequence belongs to the class-V pyridoxal-phosphate-dependent aminotransferase family. MOCOS subfamily. It depends on pyridoxal 5'-phosphate as a cofactor.

It catalyses the reaction Mo-molybdopterin + L-cysteine + AH2 = thio-Mo-molybdopterin + L-alanine + A + H2O. Functionally, sulfurates the molybdenum cofactor. Sulfation of molybdenum is essential for xanthine dehydrogenase (XDH) and aldehyde oxidase (ADO) enzymes in which molybdenum cofactor is liganded by 1 oxygen and 1 sulfur atom in active form. This Culex quinquefasciatus (Southern house mosquito) protein is Molybdenum cofactor sulfurase 2.